A 49-amino-acid chain; its full sequence is IgW transmembrane form Tm2T7/Tm7T7/Tm3T3 (49 aa).

An N-linked (GlcNAc...) asparagine glycan is attached at Asn-3. Residues 25 to 45 (VAAFAILFILSFLYSTFVTVV) form a helical membrane-spanning segment.

Expressed in the spleen. May also be expressed in other lymphoid tissues.

It is found in the membrane. The chain is IgW transmembrane form Tm2T7/Tm7T7/Tm3T3 from Heterodontus francisci (Horn shark).